We begin with the raw amino-acid sequence, 274 residues long: 2,3,4,5-tetrahydropyridine-2,6-dicarboxylate N-succinyltransferase (274 aa).

Positions 107 and 144 each coordinate substrate.

It belongs to the transferase hexapeptide repeat family. In terms of assembly, homotrimer.

It is found in the cytoplasm. It carries out the reaction (S)-2,3,4,5-tetrahydrodipicolinate + succinyl-CoA + H2O = (S)-2-succinylamino-6-oxoheptanedioate + CoA. The protein operates within amino-acid biosynthesis; L-lysine biosynthesis via DAP pathway; LL-2,6-diaminopimelate from (S)-tetrahydrodipicolinate (succinylase route): step 1/3. The protein is 2,3,4,5-tetrahydropyridine-2,6-dicarboxylate N-succinyltransferase of Cereibacter sphaeroides (strain ATCC 17025 / ATH 2.4.3) (Rhodobacter sphaeroides).